The chain runs to 675 residues: Parasporal crystal protein Cry18Ba (675 aa).

This sequence belongs to the delta endotoxin family.

Functionally, binds to the brush border membrane vesicles of scarab larvae and damages the gut wall somehow to allow the vegetative cells of P.popilliae to enter the hemolymph. In Paenibacillus popilliae (Bacillus popilliae), this protein is Parasporal crystal protein Cry18Ba (cry18Ba).